Consider the following 117-residue polypeptide: MSWRGRSTYYWPRPRRYVQPPEVIGPMRPEQFSDEVEPATPEEGEPATQRQDPAAAQEGEDEGASAGQGPKPEADSQEQGHPQTGCECEDGPDGQEVDPPNPEEVKTPEEGEKQSQC.

The segment at 1 to 117 (MSWRGRSTYY…PEEGEKQSQC (117 aa)) is disordered. Composition is skewed to acidic residues over residues 32 to 45 (FSDE…EEGE) and 87 to 96 (ECEDGPDGQE). The segment covering 103–117 (EEVKTPEEGEKQSQC) has biased composition (basic and acidic residues).

Belongs to the GAGE family. As to expression, expressed in a variety of tumor tissues but not in normal tissues, except testis.

In Homo sapiens (Human), this protein is G antigen 6 (GAGE6).